The chain runs to 42 residues: Kappa-actitoxin-Ael2a (42 aa).

3 cysteine pairs are disulfide-bonded: Cys4–Cys37, Cys6–Cys30, and Cys20–Cys38.

Belongs to the sea anemone type 3 (BDS) potassium channel toxin family.

Its subcellular location is the secreted. The protein resides in the nematocyst. Functionally, peptide with both antimicrobial and neurotoxin activities. This toxin acts both on ERG potassium channels and sodium channels. It potently and reversibly inhibits human Kv11.1/KCNH2/ERG1 (IC(50)=34 nM), rat Kv11.1/KCNH2/ERG1 and Kv11.3/KCNH7/ERG3 voltage-gated potassium channels in a similar potency. It acts as a gating-modifier toxin that shifts the voltage-dependence of ERG activation in the positive direction and suppresses its current amplitudes elicited by strong depolarizing pulses. On sodium channels, it blocks Nav1.2/SCN2A (EC(50)=31 nM), Nav1.3/SCN3A, Nav1.4/SCN4A, Nav1.5/SCN5A, Nav1.6/SCN8A, Nav1.8/SCN10A (EC(50)=92 nM). It may act by binding at site 1 or close by, only when the pore is in an open configuration. Shows antibacterial activity against the Gram-negative bacterium S.typhimurium, but not on the bacteria B.subtilis, S.aureus, and P.aeruginosa. In vivo, this toxin does not induce neurotoxic symptoms when injected into mice. This Anthopleura elegantissima (Green aggregating anemone) protein is Kappa-actitoxin-Ael2a.